We begin with the raw amino-acid sequence, 785 residues long: Endonuclease MutS2 (785 aa).

335 to 342 contacts ATP; it reads GPNTGGKT. Positions 710–785 constitute a Smr domain; it reads LDLRGERYED…GNGVTIVEFK (76 aa).

The protein belongs to the DNA mismatch repair MutS family. MutS2 subfamily. In terms of assembly, homodimer. Binds to stalled ribosomes, contacting rRNA.

Its function is as follows. Endonuclease that is involved in the suppression of homologous recombination and thus may have a key role in the control of bacterial genetic diversity. Functionally, acts as a ribosome collision sensor, splitting the ribosome into its 2 subunits. Detects stalled/collided 70S ribosomes which it binds and splits by an ATP-hydrolysis driven conformational change. Acts upstream of the ribosome quality control system (RQC), a ribosome-associated complex that mediates the extraction of incompletely synthesized nascent chains from stalled ribosomes and their subsequent degradation. Probably generates substrates for RQC. The chain is Endonuclease MutS2 from Listeria monocytogenes serovar 1/2a (strain ATCC BAA-679 / EGD-e).